A 445-amino-acid polypeptide reads, in one-letter code: Glucose-6-phosphate isomerase (445 aa).

E287 functions as the Proton donor in the catalytic mechanism. Catalysis depends on residues H308 and K422.

This sequence belongs to the GPI family.

The protein localises to the cytoplasm. The enzyme catalyses alpha-D-glucose 6-phosphate = beta-D-fructose 6-phosphate. The protein operates within carbohydrate biosynthesis; gluconeogenesis. It participates in carbohydrate degradation; glycolysis; D-glyceraldehyde 3-phosphate and glycerone phosphate from D-glucose: step 2/4. Functionally, catalyzes the reversible isomerization of glucose-6-phosphate to fructose-6-phosphate. This Bacteroides thetaiotaomicron (strain ATCC 29148 / DSM 2079 / JCM 5827 / CCUG 10774 / NCTC 10582 / VPI-5482 / E50) protein is Glucose-6-phosphate isomerase.